The following is a 149-amino-acid chain: Transcriptional repressor NrdR (149 aa).

A zinc finger lies at 3 to 34 (CPFCNADDTKVIDSRLVADGHQVRRRRECLVC). An ATP-cone domain is found at 49 to 139 (PRVIKSNGVR…VYRSFEDIRE (91 aa)).

It belongs to the NrdR family. The cofactor is Zn(2+).

In terms of biological role, negatively regulates transcription of bacterial ribonucleotide reductase nrd genes and operons by binding to NrdR-boxes. This Tolumonas auensis (strain DSM 9187 / NBRC 110442 / TA 4) protein is Transcriptional repressor NrdR.